The following is a 53-amino-acid chain: Sec-independent protein translocase protein TatA (53 aa).

The helical transmembrane segment at 1-21 threads the bilayer; sequence MGMSVSHLLIVLLIIFVLFGA.

It belongs to the TatA/E family. In terms of assembly, the Tat system comprises two distinct complexes: a TatABC complex, containing multiple copies of TatA, TatB and TatC subunits, and a separate TatA complex, containing only TatA subunits. Substrates initially bind to the TatABC complex, which probably triggers association of the separate TatA complex to form the active translocon.

It localises to the cell inner membrane. Part of the twin-arginine translocation (Tat) system that transports large folded proteins containing a characteristic twin-arginine motif in their signal peptide across membranes. TatA could form the protein-conducting channel of the Tat system. The sequence is that of Sec-independent protein translocase protein TatA from Rickettsia massiliae (strain Mtu5).